Reading from the N-terminus, the 203-residue chain is ER membrane protein complex subunit 8/9 homolog (203 aa).

In terms of domain architecture, MPN spans 4-140; it reads YKVSERAYAK…IQVFNCPGDS (137 aa).

Belongs to the EMC8/EMC9 family. In terms of assembly, component of the ER membrane protein complex (EMC).

The protein localises to the endoplasmic reticulum membrane. Part of the endoplasmic reticulum membrane protein complex (EMC) that enables the energy-independent insertion into endoplasmic reticulum membranes of newly synthesized multi-pass membrane proteins like rhodopsins. This chain is ER membrane protein complex subunit 8/9 homolog, found in Drosophila melanogaster (Fruit fly).